Here is a 334-residue protein sequence, read N- to C-terminus: 4-hydroxyproline 2-epimerase (334 aa).

Catalysis depends on C91, which acts as the Proton acceptor. Substrate contacts are provided by residues 92–93 (GH), H224, and D250. The active-site Proton donor is C254. Position 255–256 (255–256 (GT)) interacts with substrate.

This sequence belongs to the proline racemase family.

The enzyme catalyses trans-4-hydroxy-L-proline = cis-4-hydroxy-D-proline. Functionally, catalyzes the epimerization of trans-4-hydroxy-L-proline (t4LHyp) to cis-4-hydroxy-D-proline (c4DHyp). Is likely involved in a degradation pathway that converts t4LHyp to alpha-ketoglutarate. Displays no proline racemase activity. This is 4-hydroxyproline 2-epimerase from Spirosoma linguale (strain ATCC 33905 / DSM 74 / LMG 10896 / Claus 1).